The chain runs to 593 residues: Cytochrome c oxidase polypeptide 1 (593 aa).

A run of 2 helical transmembrane segments spans residues 5–25 (ASSI…VAVL) and 71–91 (IGIL…VSVL). Fe(II)-heme a is bound at residue histidine 117. 6 helical membrane passes run 122–142 (LFLF…PLLI), 154–174 (AIAF…FLIP), 204–224 (GLHL…ATIF), 246–266 (QSGL…MLLL), 288–308 (LFWF…MGIV), and 320–340 (LFGF…SFGV). Residues histidine 294 and tyrosine 298 each contribute to the Cu cation site. The segment at residues 294 to 298 (HPEVY) is a cross-link (1'-histidyl-3'-tyrosine (His-Tyr)). Residues histidine 343 and histidine 344 each coordinate Cu cation. 5 helical membrane passes run 358 to 378 (FMAV…NWIT), 401 to 421 (FIIG…LILH), 425 to 445 (YVVG…LFAA), 467 to 487 (FWTA…LGYG), and 506 to 526 (LATV…FNMA). Histidine 429 lines the heme a3 pocket. Histidine 431 contributes to the Fe(II)-heme a binding site. The segment at 562–593 (TTVLPDGGDEAQSEADAVTDGGQPAADSDTES) is disordered.

It belongs to the heme-copper respiratory oxidase family.

It localises to the cell membrane. The enzyme catalyses 4 Fe(II)-[cytochrome c] + O2 + 8 H(+)(in) = 4 Fe(III)-[cytochrome c] + 2 H2O + 4 H(+)(out). It functions in the pathway energy metabolism; oxidative phosphorylation. Cytochrome c oxidase is the component of the respiratory chain that catalyzes the reduction of oxygen to water. Subunits 1-3 form the functional core of the enzyme complex. CO I is the catalytic subunit of the enzyme. Electrons originating in cytochrome c are transferred via the copper A center of subunit 2 and heme A of subunit 1 to the bimetallic center formed by heme A3 and copper B. This Halobacterium salinarum (strain ATCC 700922 / JCM 11081 / NRC-1) (Halobacterium halobium) protein is Cytochrome c oxidase polypeptide 1 (coxA2).